The following is a 265-amino-acid chain: METKAVVLTLAVLFLTGSQARHFWQQDEPQTSWSRVKDLVTVYLDALKDSSRDYVSQFEASALGKQLNLKILDNWDTLSSTFTKLQEQMRPIFQKLWEDLDKETSPLREVLNKDLEELKQKVQPYLDQFQKKWQEEVELFRQKMAPLGTELREGSRQKLQELQEKLGPLGEELRDSLRSHVDALRTQLAPYTEEMRQRLASRLEALKESNLAEYHTKASEHLSALRENAKPALEDFRQGLMPVLEGFQKSVLAALDEATKKLNSQ.

A signal peptide spans 1–20 (METKAVVLTLAVLFLTGSQA). Tandem repeats lie at residues 69-90 (LKIL…EQMR) and 91-112 (PIFQ…EVLN). The segment at 69–265 (LKILDNWDTL…DEATKKLNSQ (197 aa)) is 10 X approximate tandem repeats. A 3; half-length repeat occupies 113–123 (KDLEELKQKVQ). A run of 5 repeats spans residues 124–145 (PYLD…QKMA), 146–167 (PLGT…EKLG), 168–189 (PLGE…TQLA), 190–209 (PYTE…LKES), and 210–230 (NLAE…ENAK). Met195 carries the methionine sulfoxide modification. Residues 231–241 (PALEDFRQGLM) form a 9; half-length repeat. Residue Met241 is modified to Methionine sulfoxide. Copy 10 of the repeat occupies 242–265 (PVLEGFQKSVLAALDEATKKLNSQ).

It belongs to the apolipoprotein A1/A4/E family. In terms of assembly, homodimer. Interacts with APOA1BP and CLU. Component of a sperm activating protein complex (SPAP), consisting of APOA1, an immunoglobulin heavy chain, an immunoglobulin light chain and albumin. Interacts with NDRG1. Interacts with SCGB3A2. Interacts with NAXE and YJEFN3. Post-translationally, glycosylated. In terms of processing, palmitoylated. Phosphorylation sites are present in the extracellular medium. In terms of tissue distribution, major protein of plasma HDL, also found in chylomicrons.

It is found in the secreted. Its function is as follows. Participates in the reverse transport of cholesterol from tissues to the liver for excretion by promoting cholesterol efflux from tissues and by acting as a cofactor for the lecithin cholesterol acyltransferase (LCAT). As part of the SPAP complex, activates spermatozoa motility. The polypeptide is Apolipoprotein A-I (APOA1) (Orycteropus afer (Aardvark)).